The sequence spans 282 residues: Stress response regulator protein 1 (282 aa).

Composition is skewed to low complexity over residues 12–30 (NLSRSSSPAAPPTTNHSST) and 41–58 (SLDTNSQSDSNSTQSNNN). Disordered regions lie at residues 12 to 31 (NLSRSSSPAAPPTTNHSSTV), 41 to 84 (SLDT…DDED), and 112 to 139 (LTPFDGQTTSPQDSIISSKSSNKSTTVV). Positions 66–77 (SDYNSYTHNQYY) are enriched in polar residues. Over residues 125-139 (SIISSKSSNKSTTVV) the composition is skewed to low complexity. The 119-residue stretch at 155–273 (SFLIVDDNII…LDFMANSIDD (119 aa)) folds into the Response regulatory domain. Asp-206 bears the 4-aspartylphosphate mark.

Its function is as follows. Required for stress adaptation, morphogenesis and virulence. In Candida albicans (strain WO-1) (Yeast), this protein is Stress response regulator protein 1 (SRR1).